Here is a 142-residue protein sequence, read N- to C-terminus: Ninjurin-2 (142 aa).

The segment at Met-1–Pro-21 is disordered. Over Met-1–Ser-60 the chain is Extracellular. Residues Pro-12–Pro-21 show a composition bias toward polar residues. The interval Asn-25–Met-37 is helix alpha1. Residues Leu-38–Gly-57 form a helix alpha2 region. Residues His-61–Leu-92 traverse the membrane as a helical segment. Over Asn-93–Glu-96 the chain is Cytoplasmic. The chain crosses the membrane as a helical span at residues Lys-97–Gly-126. Gln-103 serves as a coordination point for cholesterol. The Extracellular portion of the chain corresponds to Ala-127–Leu-142.

The protein belongs to the ninjurin family. As to quaternary structure, homooligomer; in response to stimuli, homooligomerizes into filaments. In contrast to NINJ1, the filament is curved toward the intracellular space, preventing its circularization on a relatively flat membrane to mediate plasma membrane rupture: curvature is caused by cholesterol-binding at the cytoplasmic leaflet. As to expression, widely expressed. In adult, higher expression in the bone marrow and peripheral blood lymphocytes, medium in the lung, lymph node, thyroid, uterus, thymus, spleen, prostate and skeletal muscle, lower in the liver, placenta, brain, heart and kidney. In embryo, higher expression in the thymus, heart and liver, lower in the spleen, lung, brain and kidney.

It localises to the cell membrane. Its role in unclear. In contrast to NINJ1 paralog, does not mediate plasma membrane rupture (cytolysis) downstream of necroptotic and pyroptotic programmed cell death. While it is able to oligomerize and form filaments, filaments are curved toward the intracellular space, preventing circularization to mediate plasma membrane rupture. May act as a homophilic transmembrane adhesion molecule involved in nerve regeneration. Promotes axonal growth. The protein is Ninjurin-2 of Homo sapiens (Human).